The primary structure comprises 312 residues: MAAPEAEAQETAFRTTGPPTDSEPRPFPPSSRKFPFESAAADSNEDWAVAAEHYLKGSGENGGWEQPAPGVQPSHPATMASAKTVCDAQPHSMPSCGLPADTQTRATSKLPVKSKEADLLRHLHPGGPEPDVTKVTKSRRENGQVKAAETASRRNLRNSYKPFNKQKPEEELKDKNELLEAVNKQLHQKLTETQGELKDLTQKVELLEKFQDNCLALLESKGLNPGQETLASKQEPTTDHTDSMLLLETLKDELKVFNETAKKQMEELQALKVKLKLKEEESVQFLEQQTLCKDEASDFTIILEEMEQLLEM.

Residues 1–171 are disordered; sequence MAAPEAEAQE…PFNKQKPEEE (171 aa). Residues 131-143 are compositionally biased toward basic and acidic residues; sequence DVTKVTKSRRENG. Positions 156–312 are interaction with SPAG5; the sequence is LRNSYKPFNK…LEEMEQLLEM (157 aa). Coiled-coil stretches lie at residues 166-210 and 246-287; these read QKPE…LEKF and LLET…QFLE.

Part of an astrin (SPAG5)-kinastrin (SKAP) complex containing KNSTRN, SPAG5, PLK1, DYNLL1 and SGO2A. Interacts with SPAG5. Directly binds to microtubules, although at relatively low affinity. Interacts with CENPE; this interaction greatly favors microtubule-binding. Interacts with DSN1/MIS13; leading to localization to kinetochores. Interacts with MAPRE1/EB1; leading to localization to the microtubule plus ends. Interacts with PRPF19. Interacts with DYNLL1. Interacts with MAP4.

Its subcellular location is the nucleus. It is found in the chromosome. The protein localises to the centromere. The protein resides in the kinetochore. It localises to the cytoplasm. Its subcellular location is the cytoskeleton. It is found in the spindle pole. The protein localises to the microtubule organizing center. In terms of biological role, essential component of the mitotic spindle required for faithful chromosome segregation and progression into anaphase. Promotes the metaphase-to-anaphase transition and is required for chromosome alignment, normal timing of sister chromatid segregation, and maintenance of spindle pole architecture. The astrin (SPAG5)-kinastrin (SKAP) complex promotes stable microtubule-kinetochore attachments. Required for kinetochore oscillations and dynamics of microtubule plus-ends during live cell mitosis, possibly by forming a link between spindle microtubule plus-ends and mitotic chromosomes to achieve faithful cell division. This is Small kinetochore-associated protein (Knstrn) from Mus musculus (Mouse).